Reading from the N-terminus, the 353-residue chain is Chorismate synthase (353 aa).

Arg48 contacts NADP(+). Residues 128–130 (RAS), Gly280, 295–299 (KPIPS), and Arg321 each bind FMN.

The protein belongs to the chorismate synthase family. As to quaternary structure, homotetramer. FMNH2 serves as cofactor.

It catalyses the reaction 5-O-(1-carboxyvinyl)-3-phosphoshikimate = chorismate + phosphate. It participates in metabolic intermediate biosynthesis; chorismate biosynthesis; chorismate from D-erythrose 4-phosphate and phosphoenolpyruvate: step 7/7. In terms of biological role, catalyzes the anti-1,4-elimination of the C-3 phosphate and the C-6 proR hydrogen from 5-enolpyruvylshikimate-3-phosphate (EPSP) to yield chorismate, which is the branch point compound that serves as the starting substrate for the three terminal pathways of aromatic amino acid biosynthesis. This reaction introduces a second double bond into the aromatic ring system. The polypeptide is Chorismate synthase (Nitratidesulfovibrio vulgaris (strain DSM 19637 / Miyazaki F) (Desulfovibrio vulgaris)).